The primary structure comprises 434 residues: Na(+)/H(+) antiporter NhaA 1 (434 aa).

Positions 1-15 (MISPNPALPTPPHAP) are enriched in pro residues. Residues 1–21 (MISPNPALPTPPHAPTAPGRG) are disordered. The next 12 membrane-spanning stretches (helical) occupy residues 34 to 54 (GGILLLIATVLALVIANSPAA), 74 to 94 (LSVSAWAADGLLAIFFFVVGL), 112 to 132 (ALPIAAAAGRVIVPAGIFTLI), 143 to 163 (GWAIPAATDIAFAVAVVAVVG), 173 to 193 (FLLTLAVVDDLLAITIIAVFY), 196 to 216 (GIAFVPLLLASVPLAVFGILV), 222 to 242 (AWYVLIPLGVAAWALVHASGI), 245 to 265 (TIAGVALGLLVPAIATARAGV), 294 to 314 (IAVPVFAFFSAGVTVGGLEGL), 326 to 346 (IIVALVIGKAAGITGASLLVA), 362 to 382 (VLGLSFVAGIGFTVSLLVGEL), and 393 to 413 (AVKVGVLIGLLTSAVIGGTLL).

Belongs to the NhaA Na(+)/H(+) (TC 2.A.33) antiporter family.

The protein localises to the cell membrane. It catalyses the reaction Na(+)(in) + 2 H(+)(out) = Na(+)(out) + 2 H(+)(in). Na(+)/H(+) antiporter that extrudes sodium in exchange for external protons. The polypeptide is Na(+)/H(+) antiporter NhaA 1 (Clavibacter michiganensis subsp. michiganensis (strain NCPPB 382)).